The following is a 106-amino-acid chain: NADH-quinone oxidoreductase subunit K (106 aa).

3 helical membrane-spanning segments follow: residues 8–28 (IGIE…VFGV), 35–55 (IIVF…FVAF), and 66–86 (VFVF…LAIL).

It belongs to the complex I subunit 4L family. As to quaternary structure, NDH-1 is composed of 14 different subunits. Subunits NuoA, H, J, K, L, M, N constitute the membrane sector of the complex.

It localises to the cell inner membrane. The catalysed reaction is a quinone + NADH + 5 H(+)(in) = a quinol + NAD(+) + 4 H(+)(out). NDH-1 shuttles electrons from NADH, via FMN and iron-sulfur (Fe-S) centers, to quinones in the respiratory chain. The immediate electron acceptor for the enzyme in this species is believed to be a menaquinone. Couples the redox reaction to proton translocation (for every two electrons transferred, four hydrogen ions are translocated across the cytoplasmic membrane), and thus conserves the redox energy in a proton gradient. This is NADH-quinone oxidoreductase subunit K from Flavobacterium johnsoniae (strain ATCC 17061 / DSM 2064 / JCM 8514 / BCRC 14874 / CCUG 350202 / NBRC 14942 / NCIMB 11054 / UW101) (Cytophaga johnsonae).